Here is a 374-residue protein sequence, read N- to C-terminus: Beta-1,3-N-acetylglucosaminyltransferase lunatic fringe (374 aa).

Residues 1 to 8 (MLKTYRGK) are Cytoplasmic-facing. A helical; Signal-anchor for type II membrane protein membrane pass occupies residues 9–29 (VVVSLAGATVTCLGFLLFLSQ). Topologically, residues 30–374 (HQRIQADGMQ…TPWCPPQVAY (345 aa)) are lumenal. Residue Asn40 is glycosylated (N-linked (GlcNAc...) asparagine). Positions 80–100 (RSRREADKPSEAPGAATDAPP) are disordered. Arg123 serves as a coordination point for substrate. A glycan (N-linked (GlcNAc...) asparagine) is linked at Asn162. 2 disulfide bridges follow: Cys163–Cys174 and Cys192–Cys255. A substrate-binding site is contributed by Asp196. Asp197 is a Mn(2+) binding site. The active site involves Asp285. His309 serves as a coordination point for Mn(2+). Residues Cys359 and Cys368 are joined by a disulfide bond.

It belongs to the glycosyltransferase 31 family. It depends on Mn(2+) as a cofactor. Co(2+) serves as cofactor. Post-translationally, a soluble form may be derived from the membrane form by proteolytic processing. In the embryo, expressed along the A-P axis of the neural tube, within the lateral plate mesoderm, in the presomitic mesoderm and the somites, in specific rhombomeres of the hindbrain (even-numbered rhombomeres) and in the otic vesicles.

It localises to the golgi apparatus membrane. The catalysed reaction is 3-O-(alpha-L-fucosyl)-L-threonyl-[EGF-like domain protein] + UDP-N-acetyl-alpha-D-glucosamine = 3-O-(N-acetyl-beta-D-glucosaminyl-(1-&gt;3)-alpha-L-fucosyl)-L-threonyl-[EGF-like domain protein] + UDP + H(+). The enzyme catalyses 3-O-(alpha-L-fucosyl)-L-seryl-[EGF-like domain protein] + UDP-N-acetyl-alpha-D-glucosamine = 3-O-(N-acetyl-beta-D-glucosaminyl-(1-&gt;3)-alpha-L-fucosyl)-L-seryl-[EGF-like domain protein] + UDP + H(+). Glycosyltransferase that initiates the elongation of O-linked fucose residues attached to EGF-like repeats in the extracellular domain of Notch molecules. Involved in the correct formation of boundaries in the somites and hindbrain. Required for Delta-Notch-mediated induction of hypochord cells at the lateral borders of the midline precursor domain. This is Beta-1,3-N-acetylglucosaminyltransferase lunatic fringe (lfng) from Danio rerio (Zebrafish).